A 150-amino-acid polypeptide reads, in one-letter code: UPF0178 protein Reut_B5138 (150 aa).

It belongs to the UPF0178 family.

This Cupriavidus pinatubonensis (strain JMP 134 / LMG 1197) (Cupriavidus necator (strain JMP 134)) protein is UPF0178 protein Reut_B5138.